Here is a 426-residue protein sequence, read N- to C-terminus: Probable glucose-6-phosphate isomerase (426 aa).

The active-site Proton donor is the Glu272. Residues His293 and Lys404 contribute to the active site.

Belongs to the GPI family.

It is found in the cytoplasm. It catalyses the reaction alpha-D-glucose 6-phosphate = beta-D-fructose 6-phosphate. It functions in the pathway carbohydrate biosynthesis; gluconeogenesis. It participates in carbohydrate degradation; glycolysis; D-glyceraldehyde 3-phosphate and glycerone phosphate from D-glucose: step 2/4. Catalyzes the reversible isomerization of glucose-6-phosphate to fructose-6-phosphate. In Halobacterium salinarum (strain ATCC 700922 / JCM 11081 / NRC-1) (Halobacterium halobium), this protein is Probable glucose-6-phosphate isomerase.